We begin with the raw amino-acid sequence, 135 residues long: MAKSTSSAPSQRMLRVGEQVRAAITQVLQRGEVLDPLIENTVISISEVRMSPDLKIATAYVTPLGVADHAAVIEALNKHAKFIRGRLGPQLRQMKYMPDVRFRDDTSFDNYQKIDSLLRSPEVSRDLDRDADDEE.

It belongs to the RbfA family. As to quaternary structure, monomer. Binds 30S ribosomal subunits, but not 50S ribosomal subunits or 70S ribosomes.

Its subcellular location is the cytoplasm. In terms of biological role, one of several proteins that assist in the late maturation steps of the functional core of the 30S ribosomal subunit. Associates with free 30S ribosomal subunits (but not with 30S subunits that are part of 70S ribosomes or polysomes). Required for efficient processing of 16S rRNA. May interact with the 5'-terminal helix region of 16S rRNA. The chain is Ribosome-binding factor A from Rhizobium meliloti (strain 1021) (Ensifer meliloti).